The sequence spans 326 residues: D-amino-acid oxidase (326 aa).

Residues G14, V15, I16, D36, S44, A48, A49, I50, and V157 each coordinate FAD. D-proline contacts are provided by Y219 and R274. Positions 219 and 274 each coordinate D-serine. R274, G299, G300, G302, and T304 together coordinate FAD. G300 is a binding site for D-proline. Residue G300 participates in D-serine binding.

It belongs to the DAMOX/DASOX family. Homodimer. FAD serves as cofactor.

It is found in the cytoplasm. It localises to the secreted. The protein resides in the cell wall. It carries out the reaction a D-alpha-amino acid + O2 + H2O = a 2-oxocarboxylate + H2O2 + NH4(+). The enzyme catalyses D-phenylalanine + O2 + H2O = 3-phenylpyruvate + H2O2 + NH4(+). It catalyses the reaction D-lysine + O2 + H2O = 6-amino-2-oxohexanoate + H2O2 + NH4(+). The catalysed reaction is D-methionine + O2 + H2O = 4-methylsulfanyl-2-oxobutanoate + H2O2 + NH4(+). It carries out the reaction D-arginine + O2 + H2O = 5-guanidino-2-oxopentanoate + H2O2 + NH4(+). The enzyme catalyses D-ornithine + O2 + H2O = 5-amino-2-oxopentanoate + H2O2 + NH4(+). It catalyses the reaction D-leucine + O2 + H2O = 4-methyl-2-oxopentanoate + H2O2 + NH4(+). The catalysed reaction is D-alanine + O2 + H2O = pyruvate + H2O2 + NH4(+). It carries out the reaction D-valine + O2 + H2O = 3-methyl-2-oxobutanoate + H2O2 + NH4(+). The enzyme catalyses D-histidine + O2 + H2O = 3-(imidazol-5-yl)pyruvate + H2O2 + NH4(+). Its function is as follows. Catalyzes the oxidative deamination of D-amino acids with broad substrate specificity. The protein is D-amino-acid oxidase of Glutamicibacter protophormiae (Brevibacterium protophormiae).